The primary structure comprises 702 residues: Glucoamylase (702 aa).

Positions 1–21 (MSRKLIKYLPLLVLASSVLSG) are cleaved as a signal peptide. Cysteine 22 carries the N-palmitoyl cysteine lipid modification. A lipid anchor (S-diacylglycerol cysteine) is attached at cysteine 22. Tryptophan 342 contacts substrate. Glutamate 452 serves as the catalytic Proton acceptor. Glutamate 455 acts as the Proton donor in catalysis.

Belongs to the glycosyl hydrolase 15 family.

It is found in the cell membrane. The enzyme catalyses Hydrolysis of terminal (1-&gt;4)-linked alpha-D-glucose residues successively from non-reducing ends of the chains with release of beta-D-glucose.. Functionally, CGA has typical kinetic properties for a glucoamylase, but this bacterial enzyme had higher isomaltose-hydrolyzing activity than other eukaryotic glucoamylases. This Clostridium sp. (strain G0005) protein is Glucoamylase (cga).